The primary structure comprises 339 residues: DNA-directed RNA polymerase subunit alpha (339 aa).

Residues 1–235 (MVIQKNWQEL…DQLQVFVNFE (235 aa)) are alpha N-terminal domain (alpha-NTD). The interval 251–339 (FNPALLKKVD…DLAKRFEEHY (89 aa)) is alpha C-terminal domain (alpha-CTD).

The protein belongs to the RNA polymerase alpha chain family. In terms of assembly, homodimer. The RNAP catalytic core consists of 2 alpha, 1 beta, 1 beta' and 1 omega subunit. When a sigma factor is associated with the core the holoenzyme is formed, which can initiate transcription.

The catalysed reaction is RNA(n) + a ribonucleoside 5'-triphosphate = RNA(n+1) + diphosphate. In terms of biological role, DNA-dependent RNA polymerase catalyzes the transcription of DNA into RNA using the four ribonucleoside triphosphates as substrates. The protein is DNA-directed RNA polymerase subunit alpha of Methylorubrum extorquens (strain CM4 / NCIMB 13688) (Methylobacterium extorquens).